Reading from the N-terminus, the 39-residue chain is Photosystem II reaction center protein L (39 aa).

The chain crosses the membrane as a helical span at residues 18 to 38 (SLYLGLLLTFVMGILFSSYFF).

It belongs to the PsbL family. As to quaternary structure, PSII is composed of 1 copy each of membrane proteins PsbA, PsbB, PsbC, PsbD, PsbE, PsbF, PsbH, PsbI, PsbJ, PsbK, PsbL, PsbM, PsbT, PsbX, PsbY, Psb30/Ycf12, peripheral proteins PsbO, CyanoQ (PsbQ), PsbU, PsbV and a large number of cofactors. It forms dimeric complexes.

The protein localises to the cellular thylakoid membrane. Its function is as follows. One of the components of the core complex of photosystem II (PSII). PSII is a light-driven water:plastoquinone oxidoreductase that uses light energy to abstract electrons from H(2)O, generating O(2) and a proton gradient subsequently used for ATP formation. It consists of a core antenna complex that captures photons, and an electron transfer chain that converts photonic excitation into a charge separation. This subunit is found at the monomer-monomer interface and is required for correct PSII assembly and/or dimerization. This is Photosystem II reaction center protein L from Prochlorococcus marinus (strain MIT 9211).